A 114-amino-acid polypeptide reads, in one-letter code: MSLGLLCCVAFSLLWAGPMNAGVTQTPKFHVLKTGQSMTLLCAQDMNHEYMYRYRQDPGKGLRLIYYSVAAALTDKGEVPNGYNVSRSNTEDFPLKLESAAPSQTSVYFCASSY.

The signal sequence occupies residues 1–21 (MSLGLLCCVAFSLLWAGPMNA). Residues 22–114 (GVTQTPKFHV…TSVYFCASSY (93 aa)) form the Ig-like domain. Cysteine 42 and cysteine 110 are disulfide-bonded. Asparagine 84 carries an N-linked (GlcNAc...) asparagine glycan.

As to quaternary structure, alpha-beta TR is a heterodimer composed of an alpha and beta chain; disulfide-linked. The alpha-beta TR is associated with the transmembrane signaling CD3 coreceptor proteins to form the TR-CD3 (TcR or TCR). The assembly of alpha-beta TR heterodimers with CD3 occurs in the endoplasmic reticulum where a single alpha-beta TR heterodimer associates with one CD3D-CD3E heterodimer, one CD3G-CD3E heterodimer and one CD247 homodimer forming a stable octameric structure. CD3D-CD3E and CD3G-CD3E heterodimers preferentially associate with TR alpha and TR beta chains, respectively. The association of the CD247 homodimer is the last step of TcR assembly in the endoplasmic reticulum and is required for transport to the cell surface.

It is found in the cell membrane. Functionally, probable non-functional open reading frame (ORF) of V region of the variable domain of T cell receptor (TR) beta chain. Non-functional ORF generally cannot participate in the synthesis of a productive T cell receptor (TR) chain due to altered V-(D)-J or switch recombination and/or splicing site (at mRNA level) and/or conserved amino acid change (protein level). Alpha-beta T cell receptors are antigen specific receptors which are essential to the immune response and are present on the cell surface of T lymphocytes. Recognize peptide-major histocompatibility (MH) (pMH) complexes that are displayed by antigen presenting cells (APC), a prerequisite for efficient T cell adaptive immunity against pathogens. Binding of alpha-beta TR to pMH complex initiates TR-CD3 clustering on the cell surface and intracellular activation of LCK that phosphorylates the ITAM motifs of CD3G, CD3D, CD3E and CD247 enabling the recruitment of ZAP70. In turn ZAP70 phosphorylates LAT, which recruits numerous signaling molecules to form the LAT signalosome. The LAT signalosome propagates signal branching to three major signaling pathways, the calcium, the mitogen-activated protein kinase (MAPK) kinase and the nuclear factor NF-kappa-B (NF-kB) pathways, leading to the mobilization of transcription factors that are critical for gene expression and essential for T cell growth and differentiation. The T cell repertoire is generated in the thymus, by V-(D)-J rearrangement. This repertoire is then shaped by intrathymic selection events to generate a peripheral T cell pool of self-MH restricted, non-autoaggressive T cells. Post-thymic interaction of alpha-beta TR with the pMH complexes shapes TR structural and functional avidity. The protein is Probable non-functional T cell receptor beta variable 6-7 of Homo sapiens (Human).